The following is a 465-amino-acid chain: tRNA modification GTPase MnmE (465 aa).

Residues arginine 30, glutamate 92, and arginine 132 each coordinate (6S)-5-formyl-5,6,7,8-tetrahydrofolate. A TrmE-type G domain is found at 227–388 (GLQVALVGRP…LIEAVLKTCG (162 aa)). K(+) is bound at residue asparagine 237. GTP is bound by residues 237 to 242 (NVGKSS), 256 to 262 (TDLPGTT), 281 to 284 (DTAG), and 342 to 345 (NKAD). Serine 241 lines the Mg(2+) pocket. The K(+) site is built by threonine 256, leucine 258, and threonine 261. Position 262 (threonine 262) interacts with Mg(2+). Lysine 465 is a binding site for (6S)-5-formyl-5,6,7,8-tetrahydrofolate.

Belongs to the TRAFAC class TrmE-Era-EngA-EngB-Septin-like GTPase superfamily. TrmE GTPase family. As to quaternary structure, homodimer. Heterotetramer of two MnmE and two MnmG subunits. Requires K(+) as cofactor.

It is found in the cytoplasm. In terms of biological role, exhibits a very high intrinsic GTPase hydrolysis rate. Involved in the addition of a carboxymethylaminomethyl (cmnm) group at the wobble position (U34) of certain tRNAs, forming tRNA-cmnm(5)s(2)U34. The sequence is that of tRNA modification GTPase MnmE from Prochlorococcus marinus (strain MIT 9303).